An 89-amino-acid polypeptide reads, in one-letter code: UPF0223 protein Bcer98_2663 (89 aa).

Belongs to the UPF0223 family.

The chain is UPF0223 protein Bcer98_2663 from Bacillus cytotoxicus (strain DSM 22905 / CIP 110041 / 391-98 / NVH 391-98).